The following is a 367-amino-acid chain: Protein SGT1 homolog (367 aa).

TPR repeat units lie at residues 6–39 (ASDLESKAKAAFVDDDFELAAELYTQAIEASPAT), 40–73 (AELYADRAQAHIKLGNYTEAVADANKAIELDPSM), and 75–107 (KAYLRKGAACIRLEEYQTAKAALELGYSFASGD). Residues 165 to 254 (KPKYRHDFYN…AEQITWTSLD (90 aa)) enclose the CS domain. 2 disordered regions span residues 261–289 (AVPQKIIPPAESAQRPSYPSSKSKKDWDK) and 347–367 (VGSKKVEGSPPDGMELKKWEY). One can recognise an SGS domain in the interval 277–367 (SYPSSKSKKD…DGMELKKWEY (91 aa)).

It belongs to the SGT1 family. Interacts (via CS domain) with RAR1 (via CHORD 2 domain). Interacts with RAD6. Expressed in roots, root tips, shoot apical meristem (SAM), young leaves, flag leaves and ears.

The protein localises to the cytoplasm. It localises to the nucleus. Its function is as follows. Involved in basal disease resistance to bacterial blight (X.oryzae). May act as positive regulator of basal defense. Probably required for SCF-mediated ubiquitination, by coupling HSP90 to SCF complex for ubiquitination of HSP90 client proteins. This is Protein SGT1 homolog from Oryza sativa subsp. japonica (Rice).